We begin with the raw amino-acid sequence, 470 residues long: Nitric oxide synthase, inducible (470 aa).

3 residues coordinate L-arginine: Trp2, Tyr3, and Glu7. 3 residues coordinate (6R)-L-erythro-5,6,7,8-tetrahydrobiopterin: Arg11, Trp93, and Phe106. Tyr121 is a heme b binding site. A calmodulin-binding region spans residues 145 to 165 (FKAVARAALFSSTLMSRVLAN). The Flavodoxin-like domain maps to 169-307 (CTVLYATETG…AFSAWALTAL (139 aa)). Thr175, Glu176, Thr177, Lys179, Ser180, Ser221, Thr222, Ser258, Cys265, Glu291, and Gln295 together coordinate FMN. Arg380 provides a ligand contact to NADP(+). His403 is a binding site for FAD. Thr440 is a binding site for NADP(+).

Belongs to the NOS family. As to quaternary structure, homodimer. Heme b serves as cofactor. It depends on FAD as a cofactor. The cofactor is FMN. (6R)-L-erythro-5,6,7,8-tetrahydrobiopterin is required as a cofactor.

It is found in the cytoplasm. The protein localises to the cytosol. The enzyme catalyses 2 L-arginine + 3 NADPH + 4 O2 + H(+) = 2 L-citrulline + 2 nitric oxide + 3 NADP(+) + 4 H2O. Not stimulated by calcium/calmodulin. Functionally, produces nitric oxide (NO) which is a messenger molecule with diverse functions throughout the body. In macrophages, NO mediates tumoricidal and bactericidal actions. Also has nitrosylase activity and mediates cysteine S-nitrosylation of cytoplasmic target proteins such COX2. In Oncorhynchus mykiss (Rainbow trout), this protein is Nitric oxide synthase, inducible (nos2).